We begin with the raw amino-acid sequence, 66 residues long: Large ribosomal subunit protein bL35 (66 aa).

This sequence belongs to the bacterial ribosomal protein bL35 family.

This chain is Large ribosomal subunit protein bL35, found in Synechococcus sp. (strain ATCC 27144 / PCC 6301 / SAUG 1402/1) (Anacystis nidulans).